Reading from the N-terminus, the 20-residue chain is Alanine aminotransferase 1 (20 aa).

Lysine 11 carries the post-translational modification N6-(pyridoxal phosphate)lysine. An N-linked (Glc) (glycation) lysine; in vitro glycan is attached at lysine 11.

The protein belongs to the class-I pyridoxal-phosphate-dependent aminotransferase family. Alanine aminotransferase subfamily. Homodimer. Requires pyridoxal 5'-phosphate as cofactor. In terms of processing, glycation of Lys-11 inactivates the enzyme.

It localises to the cytoplasm. It carries out the reaction L-alanine + 2-oxoglutarate = pyruvate + L-glutamate. Its pathway is amino-acid degradation; L-alanine degradation via transaminase pathway; pyruvate from L-alanine: step 1/1. In terms of biological role, catalyzes the reversible transamination between alanine and 2-oxoglutarate to form pyruvate and glutamate. Participates in cellular nitrogen metabolism and also in liver gluconeogenesis starting with precursors transported from skeletal muscles. The chain is Alanine aminotransferase 1 (GPT) from Sus scrofa (Pig).